A 389-amino-acid polypeptide reads, in one-letter code: Acetate kinase (389 aa).

Residue Asn9 coordinates Mg(2+). Lys16 is an ATP binding site. Residue Arg77 participates in substrate binding. The Proton donor/acceptor role is filled by Asp134. ATP contacts are provided by residues 194–198 (HLGNG), 268–270 (DFR), and 316–320 (GVGEN). Glu370 provides a ligand contact to Mg(2+).

It belongs to the acetokinase family. As to quaternary structure, homodimer. It depends on Mg(2+) as a cofactor. Mn(2+) is required as a cofactor.

It localises to the cytoplasm. The catalysed reaction is acetate + ATP = acetyl phosphate + ADP. It functions in the pathway metabolic intermediate biosynthesis; acetyl-CoA biosynthesis; acetyl-CoA from acetate: step 1/2. Functionally, catalyzes the formation of acetyl phosphate from acetate and ATP. Can also catalyze the reverse reaction. The sequence is that of Acetate kinase from Mycolicibacterium vanbaalenii (strain DSM 7251 / JCM 13017 / BCRC 16820 / KCTC 9966 / NRRL B-24157 / PYR-1) (Mycobacterium vanbaalenii).